A 398-amino-acid chain; its full sequence is Acetyl-CoA acetyltransferase erg10B, cytosolic (398 aa).

The active-site Acyl-thioester intermediate is cysteine 92. K(+) is bound at residue tyrosine 187. Residues asparagine 229 and lysine 232 each contribute to the CoA site. K(+) contacts are provided by alanine 249, proline 250, and serine 252. A CoA-binding site is contributed by serine 253. Valine 350 lines the K(+) pocket. Active-site proton acceptor residues include histidine 354 and cysteine 384. Chloride is bound at residue asparagine 385.

The protein belongs to the thiolase-like superfamily. Thiolase family. Homotetramer. Requires K(+) as cofactor.

The protein localises to the cytoplasm. It localises to the cytosol. The catalysed reaction is 2 acetyl-CoA = acetoacetyl-CoA + CoA. The protein operates within metabolic intermediate biosynthesis; (R)-mevalonate biosynthesis; (R)-mevalonate from acetyl-CoA: step 1/3. Its activity is regulated as follows. Activity is increased by monovalent cations such as K(+), Rb(+) or Cs(+). Acetyl-CoA acetyltransferase; part of the first module of ergosterol biosynthesis pathway that includes the early steps of the pathway, conserved across all eukaryotes, and which results in the formation of mevalonate from acetyl-coenzyme A (acetyl-CoA). In this module, the cytosolic acetyl-CoA acetyltransferase erg10B catalyzes the formation of acetoacetyl-CoA. The hydroxymethylglutaryl-CoA synthases AFUA_8G07210 and AFUA_3G10660 then condense acetyl-CoA with acetoacetyl-CoA to form HMG-CoA. The rate-limiting step of the early module is the reduction to mevalonate by the 3-hydroxy-3-methylglutaryl-coenzyme A (HMG-CoA) reductases hmg1 and hmg2. Mevalonate is also a precursor for the extracellular siderophore triacetylfusarinine C (TAFC). The chain is Acetyl-CoA acetyltransferase erg10B, cytosolic from Aspergillus fumigatus (strain CBS 144.89 / FGSC A1163 / CEA10) (Neosartorya fumigata).